A 342-amino-acid chain; its full sequence is Phenylalanine--tRNA ligase alpha subunit (342 aa).

E255 lines the Mg(2+) pocket.

Belongs to the class-II aminoacyl-tRNA synthetase family. Phe-tRNA synthetase alpha subunit type 1 subfamily. As to quaternary structure, tetramer of two alpha and two beta subunits. Mg(2+) serves as cofactor.

It is found in the cytoplasm. The enzyme catalyses tRNA(Phe) + L-phenylalanine + ATP = L-phenylalanyl-tRNA(Phe) + AMP + diphosphate + H(+). The sequence is that of Phenylalanine--tRNA ligase alpha subunit from Pelodictyon phaeoclathratiforme (strain DSM 5477 / BU-1).